The following is a 286-amino-acid chain: Foldase protein PrsA 1 (286 aa).

An N-terminal signal peptide occupies residues 1 to 18; it reads MKKAMLALAATSVIALSA. Residue Cys-19 is the site of N-palmitoyl cysteine attachment. Residue Cys-19 is the site of S-diacylglycerol cysteine attachment. A PpiC domain is found at 130 to 220; it reads KPEIKASHIL…FGYHIIKVTD (91 aa).

Belongs to the PrsA family.

It localises to the cell membrane. It catalyses the reaction [protein]-peptidylproline (omega=180) = [protein]-peptidylproline (omega=0). Functionally, plays a major role in protein secretion by helping the post-translocational extracellular folding of several secreted proteins. The chain is Foldase protein PrsA 1 (prsA1) from Bacillus cereus (strain ATCC 14579 / DSM 31 / CCUG 7414 / JCM 2152 / NBRC 15305 / NCIMB 9373 / NCTC 2599 / NRRL B-3711).